The chain runs to 701 residues: Serologically defined colon cancer antigen 8 homolog (701 aa).

Over residues 1-13 (MKPSLESDEEEEL) the composition is skewed to acidic residues. 2 disordered regions span residues 1–67 (MKPS…VQQS) and 84–114 (ANIQSLSPSRRKLAAKRATDDGSSSQPGVHN). The span at 45–67 (SEPNQQELLSSVQQNPCSPVQQS) shows a compositional bias: polar residues. 3 coiled-coil regions span residues 119-173 (INNQ…LKEY), 203-258 (HKWR…AVAA), and 323-695 (QQVK…AGKR). A disordered region spans residues 364–387 (LASEQDKISQAREAARSESKKERE).

The protein resides in the cytoplasm. It localises to the cytoskeleton. It is found in the microtubule organizing center. The protein localises to the centrosome. Its subcellular location is the centriole. The protein resides in the cilium basal body. It localises to the cell junction. In terms of biological role, plays a role in the establishment of cell polarity and epithelial lumen formation. Also plays an essential role in ciliogenesis and subsequent Hedgehog signaling pathway that requires the presence of intact primary cilia for pathway activation. Mechanistically, interacts with and mediates RABEP2 centrosomal localization which is critical for ciliogenesis. This Danio rerio (Zebrafish) protein is Serologically defined colon cancer antigen 8 homolog (Sdccag8).